The chain runs to 323 residues: Oligodendrocyte transcription factor 2 (323 aa).

Residues 1-13 (MDSDASLVSSRPS) show a composition bias toward polar residues. The segment at 1–107 (MDSDASLVSS…KKQMTEPELQ (107 aa)) is disordered. Residues 77–93 (SSSSSTSSSTSSAATSS) are compositionally biased toward low complexity. The 55-residue stretch at 108–162 (QLRLKINSRERKRMHDLNIAMDGLREVMPYAHGPSVRKLSKIATLLLARNYILML) folds into the bHLH domain.

As to quaternary structure, interacts with NKX2-2. Interacts with ZNF488. As to expression, expressed specifically in the brain.

It localises to the nucleus. It is found in the cytoplasm. Its function is as follows. Required for oligodendrocyte and motor neuron specification in the spinal cord, as well as for the development of somatic motor neurons in the hindbrain. Functions together with ZNF488 to promote oligodendrocyte differentiation. Cooperates with OLIG1 to establish the pMN domain of the embryonic neural tube. Antagonist of V2 interneuron and of NKX2-2-induced V3 interneuron development. In Mus musculus (Mouse), this protein is Oligodendrocyte transcription factor 2 (Olig2).